Reading from the N-terminus, the 674-residue chain is MAQAYWQCYPWLVLLCACAWSYPEPKYLGREDVRNCSTSPERLPVTAVNTTMRLAALRQQMETWNLSAYIIPDTDAHMSEYIGKPDKRREWISGFTGSAGTAVVTMGKAAVWTDSRYWTQAERQMDCNWELHKEVSISSIVAWILAEVPDGQNVGFDPFLFSVDSWKNYDQGFQDSSRHLLSVTTNLVDVAWGSERPPVPSQPIYALPKEFTGSTWQEKVSAVRSYMEHHAKTPTGVLLSALDETAWLFNLRSSDIPYNPFFYSYALLTNSSIRLFVNKSRFSLETLQYLNTNCTLPMCVQLEDYSQVRDSVKAYASGDVKILIGVSYTTYGVYEVIPKEKLVTDTYSPVMLIKAVKNSKEQALLKSSHVRDAVAVIQYLVWLEKNVPKGTVDEFSGAEYIDELRRNENFSSGPSFETISASGLNAALAHYSPTKELHRKLSSDEMYLVDSGGQYWDGTTDITRTVHWGTPTAFQKEAYTRVLMGNIDLSRLVFPAATSGRVIEAFARRALWEVGLNYGHGTGHGIGNFLCVHEWPVGFQYNNIAMAKGMFTSIEPGYYHDGEFGIRLEDVALVVEAKTKYPGDYLTFELVSFVPYDRNLIDVRLLSPEQLQYLNRYYQTIRENVGPELQRRQLLEEFAWLEQHTEPLSARAPHIISWTSLWVASALAILSWSS.

Residues methionine 1–tyrosine 22 form the signal peptide. Residue asparagine 65 is glycosylated (N-linked (GlcNAc...) asparagine). Position 116 (arginine 116) interacts with substrate. Residues asparagine 270, asparagine 278, and asparagine 293 are each glycosylated (N-linked (GlcNAc...) asparagine). Histidine 430 is a binding site for substrate. Positions 450, 461, and 524 each coordinate Zn(2+). Substrate-binding residues include histidine 524, histidine 533, and glutamate 555. 2 residues coordinate Zn(2+): glutamate 555 and glutamate 569. Alanine 650 carries the GPI-anchor amidated alanine lipid modification. The propeptide at arginine 651 to serine 674 is removed in mature form.

Belongs to the peptidase M24B family. In terms of assembly, homotrimer. Zn(2+) is required as a cofactor. N-glycosylated. In terms of tissue distribution, strongly expressed in small intestine, heart and lung. Also detected in testis, skeletal muscle, spleen, liver, kidney, brain, uterus, eye, lymph node, thymus, stomach, prostate and bone marrow.

The protein localises to the cell membrane. The catalysed reaction is Release of any N-terminal amino acid, including proline, that is linked to proline, even from a dipeptide or tripeptide.. Functionally, membrane-bound metalloprotease which catalyzes the removal of a penultimate prolyl residue from the N-termini of peptides, such as Arg-Pro-Pro. May play a role in the metabolism of the vasodilator bradykinin. This is Xaa-Pro aminopeptidase 2 from Mus musculus (Mouse).